A 224-amino-acid polypeptide reads, in one-letter code: Ribonuclease 3 (224 aa).

The RNase III domain maps to 4–126 (LDRLQHKIGY…IIGAMSLDSN (123 aa)). Glutamate 39 is a Mg(2+) binding site. The active site involves aspartate 43. Aspartate 112 and glutamate 115 together coordinate Mg(2+). Residue glutamate 115 is part of the active site. Residues 153–223 (DPKTRLQEYL…AEQILKVLDI (71 aa)) form the DRBM domain.

The protein belongs to the ribonuclease III family. As to quaternary structure, homodimer. Mg(2+) is required as a cofactor.

It is found in the cytoplasm. It carries out the reaction Endonucleolytic cleavage to 5'-phosphomonoester.. In terms of biological role, digests double-stranded RNA. Involved in the processing of primary rRNA transcript to yield the immediate precursors to the large and small rRNAs (23S and 16S). Processes some mRNAs, and tRNAs when they are encoded in the rRNA operon. Processes pre-crRNA and tracrRNA of type II CRISPR loci if present in the organism. This is Ribonuclease 3 from Actinobacillus succinogenes (strain ATCC 55618 / DSM 22257 / CCUG 43843 / 130Z).